A 505-amino-acid chain; its full sequence is OVARIAN TUMOR DOMAIN-containing deubiquitinating enzyme 6 (505 aa).

Residues 1–191 (MTRILVQRGS…NSSDEHMPCY (191 aa)) are disordered. The segment covering 9 to 30 (GSSGSSSNSSRPSSSSSSSSGS) has biased composition (low complexity). Over residues 51 to 72 (DEKQEEVTVVEKAECSDAKDVA) the composition is skewed to basic and acidic residues. The span at 73–86 (VDSDEPADREDDEG) shows a compositional bias: acidic residues. Over residues 115-124 (PPVPAPPPKP) the composition is skewed to pro residues. Residues 159-173 (SSRSSPTGSHPSSPR) are compositionally biased toward low complexity. Residues 174 to 188 (SHSENEGYNSSDEHM) show a composition bias toward basic and acidic residues. The region spanning 216–339 (FEIRRMLEDG…GNHYNSLVDP (124 aa)) is the OTU domain. Asp-224 is a catalytic residue. Cys-227 serves as the catalytic Nucleophile. Residue His-332 is part of the active site. Positions 416 to 447 (RIGPKESSTSNAETSSSGARPSGSDSKPAEAV) are disordered. The segment covering 421-441 (ESSTSNAETSSSGARPSGSDS) has biased composition (low complexity). Residues 446 to 491 (AVKEKTVLSSSIEMVLSMGFSYAQAMEAYSIFGDDVDSMVCYVLET) enclose the UBA domain.

This sequence belongs to the peptidase C85 family. In terms of assembly, interacts with KDM1C. Mostly expressed in stems flowers and siliques, and, to a lower extent, in leaves, roots and seedlings.

Its subcellular location is the nucleus. It localises to the cytoplasm. It carries out the reaction Thiol-dependent hydrolysis of ester, thioester, amide, peptide and isopeptide bonds formed by the C-terminal Gly of ubiquitin (a 76-residue protein attached to proteins as an intracellular targeting signal).. In terms of biological role, hydrolase that can remove conjugated ubiquitin from proteins in vitro and may therefore play an important regulatory role at the level of protein turnover by preventing degradation. Binds chromatin (e.g. nucleosomes and histones) and has enzymatic histone deubiquitinase activity, specific for the H2B histone. Can both repress (e.g. OSR2) and promote (e.g. AN3) the expression of target genes by associating with chromatin, deubiquitinating H2B and regulating its euchromatic histone marks (e.g. H3ac and H3K4me). In association with LDL1/KDM1C, involved in transcriptional gene repression via histone deubiquitination and demethylation. Promotes the concerted epigenetic regulation and repression (e.g. the removal of euchromatic histone acetylation, ubiquitination, and methylation marks) of a set of genes (e.g. GA20OX, WUS, OSR2, ARL and ABI5) that collectively limit plant growth thus stimulating plant growth and increasing cell size. The polypeptide is OVARIAN TUMOR DOMAIN-containing deubiquitinating enzyme 6 (Arabidopsis thaliana (Mouse-ear cress)).